A 117-amino-acid chain; its full sequence is NADH-ubiquinone oxidoreductase chain 3 (117 aa).

3 helical membrane-spanning segments follow: residues 4-24 (IIII…LASI), 60-80 (ITII…MIII), and 86-106 (IMIW…GLYH).

This sequence belongs to the complex I subunit 3 family.

It localises to the mitochondrion membrane. The enzyme catalyses a ubiquinone + NADH + 5 H(+)(in) = a ubiquinol + NAD(+) + 4 H(+)(out). In terms of biological role, core subunit of the mitochondrial membrane respiratory chain NADH dehydrogenase (Complex I) that is believed to belong to the minimal assembly required for catalysis. Complex I functions in the transfer of electrons from NADH to the respiratory chain. The immediate electron acceptor for the enzyme is believed to be ubiquinone. The protein is NADH-ubiquinone oxidoreductase chain 3 (mt:ND3) of Drosophila yakuba (Fruit fly).